The following is a 303-amino-acid chain: Phytochrome-associated serine/threonine-protein phosphatase 1 (303 aa).

Residues aspartate 50, histidine 52, aspartate 78, and asparagine 110 each coordinate Zn(2+). The Proton donor role is filled by histidine 111. Zn(2+)-binding residues include histidine 160 and histidine 234.

The protein belongs to the PPP phosphatase family. PP-6 (PP-V) subfamily. Interacts with PHYA and PHYB, mostly when they are phosphorylated and in Pfr forms. Interacts with TAP46. Interacts with PIN1 and PIN2. Interacts with ABI5. Interacts with PIF3 and PIF4. Protein phosphatase 6 (PP6) holoenzyme is a heterotrimeric complex formed by the catalytic subunit FYPP, a SAPS domain-containing subunit (SAL) and a protein phosphatase 2A regulatory subunit A (PP2AA). The cofactor is Zn(2+). In terms of tissue distribution, mostly expressed in flowers. Also detected to a lower extent in stems and leaves. Expressed in roots.

It localises to the cytoplasm. It catalyses the reaction O-phospho-L-seryl-[protein] + H2O = L-seryl-[protein] + phosphate. The enzyme catalyses O-phospho-L-threonyl-[protein] + H2O = L-threonyl-[protein] + phosphate. In terms of biological role, catalytic subunit of protein phosphatase 6 (PP6). Dephosphorylates phosphorylated phytochromes, with a preference toward Pfr forms. Plays a major role in the photoperiodic control of flowering time in long days by modulating phytochrome signals in flowering time control. Involved in the regulation of polar auxin transport in roots. Dephosphorylates directly the auxin efflux carriers PIN1 and PIN2, thus promoting their proper polar localization in root cell plasma membrane. Acts antagonistically with the protein kinase PID to regulate the reversible phosphorylation of PIN and polar targeting, subsequently impacting polar auxin transport and plant development. Involved in the regulation of abscisic acid (ABA) signaling during seed germination and postgermination seedling growth. Functions as a negative regulator of ABA signaling through direct dephosphorylation and destabilization of ABI5. Acts antagonistically with the protein kinase SRK2E/SNRK2.6 to regulate ABI5 phosphorylation and ABA responses. Involved in the regulation of phosphorylation status in hypocotyl phototropism. Involved in the negative regulation of photomorphogenesis by controlling the stability and transcriptional activity of PIF3 and PIF4 proteins in the dark, via the regulation of their phosphorylation status. The sequence is that of Phytochrome-associated serine/threonine-protein phosphatase 1 from Arabidopsis thaliana (Mouse-ear cress).